The chain runs to 1390 residues: DNA-directed RNA polymerase subunit beta (1390 aa).

Belongs to the RNA polymerase beta chain family. As to quaternary structure, the RNAP catalytic core consists of 2 alpha, 1 beta, 1 beta' and 1 omega subunit. When a sigma factor is associated with the core the holoenzyme is formed, which can initiate transcription.

It catalyses the reaction RNA(n) + a ribonucleoside 5'-triphosphate = RNA(n+1) + diphosphate. Its function is as follows. DNA-dependent RNA polymerase catalyzes the transcription of DNA into RNA using the four ribonucleoside triphosphates as substrates. This chain is DNA-directed RNA polymerase subunit beta, found in Rhodopseudomonas palustris (strain HaA2).